We begin with the raw amino-acid sequence, 83 residues long: U-actitoxin-Avd8d (83 aa).

An N-terminal signal peptide occupies residues 1–19 (MASTRLFVLLVIGTVLLCQ). A propeptide spanning residues 20-38 (VSGFLDELLAEHELPQDMT) is cleaved from the precursor.

It belongs to the sea anemone 8 toxin family.

The protein localises to the secreted. The protein resides in the nematocyst. The polypeptide is U-actitoxin-Avd8d (Anemonia viridis (Snakelocks anemone)).